The sequence spans 252 residues: Ribosomal RNA small subunit methyltransferase J (252 aa).

Residues 104–105 (RD), 120–121 (ER), and D174 contribute to the S-adenosyl-L-methionine site.

It belongs to the methyltransferase superfamily. RsmJ family.

The protein localises to the cytoplasm. It catalyses the reaction guanosine(1516) in 16S rRNA + S-adenosyl-L-methionine = N(2)-methylguanosine(1516) in 16S rRNA + S-adenosyl-L-homocysteine + H(+). Specifically methylates the guanosine in position 1516 of 16S rRNA. The sequence is that of Ribosomal RNA small subunit methyltransferase J from Mannheimia succiniciproducens (strain KCTC 0769BP / MBEL55E).